We begin with the raw amino-acid sequence, 198 residues long: HTH-type transcriptional regulator BetI (198 aa).

The 61-residue stretch at 8 to 68 folds into the HTH tetR-type domain; sequence PLRRRELIDA…ATMRHLLREL (61 aa). Positions 31–50 form a DNA-binding region, H-T-H motif; sequence TVAQIAHEAGVSPALAHHYF.

The protein operates within amine and polyamine biosynthesis; betaine biosynthesis via choline pathway [regulation]. In terms of biological role, repressor involved in the biosynthesis of the osmoprotectant glycine betaine. It represses transcription of the choline transporter BetT and the genes of BetAB involved in the synthesis of glycine betaine. This is HTH-type transcriptional regulator BetI from Brucella canis (strain ATCC 23365 / NCTC 10854 / RM-666).